Reading from the N-terminus, the 261-residue chain is Urease accessory protein UreD (261 aa).

This sequence belongs to the UreD family. In terms of assembly, ureD, UreF and UreG form a complex that acts as a GTP-hydrolysis-dependent molecular chaperone, activating the urease apoprotein by helping to assemble the nickel containing metallocenter of UreC. The UreE protein probably delivers the nickel.

Its subcellular location is the cytoplasm. Functionally, required for maturation of urease via the functional incorporation of the urease nickel metallocenter. This is Urease accessory protein UreD from Haemophilus influenzae (strain ATCC 51907 / DSM 11121 / KW20 / Rd).